A 205-amino-acid polypeptide reads, in one-letter code: Glycerol-3-phosphate acyltransferase (205 aa).

5 helical membrane passes run 4–24 (IAPGLVLLAYLCGSISSAILV), 80–100 (PFWLGLVAIAACVGHIWPVFF), 107–127 (GVATAFGAIAPIGLDLTGVMA), 130–150 (WLLTILLSGYSSLGAIVSALI), and 155–175 (VWWFKPQYTFPVSMLSCLILL).

Belongs to the PlsY family. As to quaternary structure, probably interacts with PlsX.

The protein resides in the cell inner membrane. The enzyme catalyses an acyl phosphate + sn-glycerol 3-phosphate = a 1-acyl-sn-glycero-3-phosphate + phosphate. It participates in lipid metabolism; phospholipid metabolism. Catalyzes the transfer of an acyl group from acyl-phosphate (acyl-PO(4)) to glycerol-3-phosphate (G3P) to form lysophosphatidic acid (LPA). This enzyme utilizes acyl-phosphate as fatty acyl donor, but not acyl-CoA or acyl-ACP. This is Glycerol-3-phosphate acyltransferase from Klebsiella pneumoniae subsp. pneumoniae (strain ATCC 700721 / MGH 78578).